A 473-amino-acid polypeptide reads, in one-letter code: Photosystem II CP43 reaction center protein (473 aa).

The propeptide occupies 1 to 14 (MKTLYSPRRFYPVE). T15 is modified (N-acetylthreonine). A Phosphothreonine modification is found at T15. 5 helical membrane-spanning segments follow: residues 69 to 93 (LFEV…PHLA), 134 to 155 (LIGP…KDRN), 178 to 200 (KALF…RKIT), 255 to 275 (KPFA…LSYS), and 291 to 312 (WFNN…ASQA). E367 is a binding site for [CaMn4O5] cluster. Residues 447–471 (RARAAAAGFEKGIDRDLEPVLFMTP) traverse the membrane as a helical segment.

This sequence belongs to the PsbB/PsbC family. PsbC subfamily. PSII is composed of 1 copy each of membrane proteins PsbA, PsbB, PsbC, PsbD, PsbE, PsbF, PsbH, PsbI, PsbJ, PsbK, PsbL, PsbM, PsbT, PsbX, PsbY, PsbZ, Psb30/Ycf12, at least 3 peripheral proteins of the oxygen-evolving complex and a large number of cofactors. It forms dimeric complexes. Requires Binds multiple chlorophylls and provides some of the ligands for the Ca-4Mn-5O cluster of the oxygen-evolving complex. It may also provide a ligand for a Cl- that is required for oxygen evolution. PSII binds additional chlorophylls, carotenoids and specific lipids. as cofactor.

The protein localises to the plastid. It localises to the chloroplast thylakoid membrane. In terms of biological role, one of the components of the core complex of photosystem II (PSII). It binds chlorophyll and helps catalyze the primary light-induced photochemical processes of PSII. PSII is a light-driven water:plastoquinone oxidoreductase, using light energy to abstract electrons from H(2)O, generating O(2) and a proton gradient subsequently used for ATP formation. In Gnetum parvifolium (Small-leaved jointfir), this protein is Photosystem II CP43 reaction center protein.